We begin with the raw amino-acid sequence, 303 residues long: Bifunctional protein FolD 2 (303 aa).

NADP(+) contacts are provided by residues 169 to 171, Ser-194, and Ile-235; that span reads GRS.

Belongs to the tetrahydrofolate dehydrogenase/cyclohydrolase family. In terms of assembly, homodimer.

The catalysed reaction is (6R)-5,10-methylene-5,6,7,8-tetrahydrofolate + NADP(+) = (6R)-5,10-methenyltetrahydrofolate + NADPH. It carries out the reaction (6R)-5,10-methenyltetrahydrofolate + H2O = (6R)-10-formyltetrahydrofolate + H(+). It functions in the pathway one-carbon metabolism; tetrahydrofolate interconversion. Catalyzes the oxidation of 5,10-methylenetetrahydrofolate to 5,10-methenyltetrahydrofolate and then the hydrolysis of 5,10-methenyltetrahydrofolate to 10-formyltetrahydrofolate. The sequence is that of Bifunctional protein FolD 2 from Ectopseudomonas mendocina (strain ymp) (Pseudomonas mendocina).